Consider the following 611-residue polypeptide: Developmental and secondary metabolism regulator veA (611 aa).

Disordered stretches follow at residues 1-57 (MNRK…RPVD), 222-497 (RRRE…ASFD), and 511-611 (LEAS…PGHA). Over residues 14–23 (KSSATRTTND) the composition is skewed to polar residues. Residues 24-216 (GRAITYEMQV…AEQGCRVRIR (193 aa)) enclose the Velvet domain. The short motif at 38 to 43 (QRARAC) is the Nuclear localization signal element. Positions 242–254 (AARARASATPDPS) are enriched in low complexity. Over residues 274–290 (SASNASHQSLGSISRRP) the composition is skewed to polar residues. Low complexity predominate over residues 330-340 (YPPNQFVQQQP). The span at 341-361 (PMQPPLPQYQPPNYPAPPPPV) shows a compositional bias: pro residues. Positions 362-377 (TAAQQPQPAQSYYNYP) are enriched in low complexity. Polar residues predominate over residues 419-434 (RNSQQIPPTSQPTAYT). 2 stretches are compositionally biased toward low complexity: residues 435 to 452 (QPMQ…QHYQ) and 461 to 471 (QASQHSSYSSM). Residues 455–499 (PPPPPSQASQHSSYSSMDLYNSRPAPIEPHHHGNTPASKASFDLP) are PEST. Positions 511–533 (LEASSPTSVAPTNAYFSGGQTPI) are enriched in polar residues.

This sequence belongs to the velvet family. VeA subfamily. In terms of assembly, component of the heterotrimeric velvet complex composed of laeA, veA and velB; VeA acting as a bridging protein between laeA and velB.

The protein resides in the nucleus. It localises to the cytoplasm. Its function is as follows. Component of the velvet transcription factor complex that controls sexual/asexual developmental ratio in response to light, promoting sexual development in the darkness while stimulating asexual sporulation under illumination. The velvet complex hat acts as a global regulator for secondary metabolite gene expression. Controls the expression of the dothistromin gene cluster. Regulates hyphal growth and pigment formation. Acts as a positive regulator of virulence. This chain is Developmental and secondary metabolism regulator veA, found in Dothistroma septosporum (strain NZE10 / CBS 128990) (Red band needle blight fungus).